A 356-amino-acid chain; its full sequence is Peptide chain release factor 1 (356 aa).

Gln232 bears the N5-methylglutamine mark. The interval 281 to 301 is disordered; the sequence is ERQSSELSADRKAQVGSGDRS.

Belongs to the prokaryotic/mitochondrial release factor family. Post-translationally, methylated by PrmC. Methylation increases the termination efficiency of RF1.

The protein localises to the cytoplasm. Functionally, peptide chain release factor 1 directs the termination of translation in response to the peptide chain termination codons UAG and UAA. This Desulfovibrio desulfuricans (strain ATCC 27774 / DSM 6949 / MB) protein is Peptide chain release factor 1.